A 485-amino-acid chain; its full sequence is MAALMLQGTGSDVGKSVLVAGLCRALANRGLRVRPFKPQNMSNNAAVTIDGGEIGRAQALQALACRTPPHSDMNPVLLKPQADRTSQLIVHGRVRGTLGSGNFRAGRGALLPDVLESYGRLRRQCDIVIVEGAGSPAEINLRAGDIANMGFARAARVPVVLVGDIDRGGVIAAIVGTRTVIDAEDAAMIKGFVINKFRGDPALFDDGYRAIAERSGWPGLGVVPWLAAAARLPSEDAVILERRADAREGRRIVACPILPRIANFDDLDPLKQEPGVELLMVPPGQPIPAEAAIIVLPGSKATIADLAALRREGWDIDIKAHHRRGGLILGLCGGYQMLGTRIADPLGIEGAASEVEGLGLLDVTTELAPAKTLREVTGTAWNSPVAGYEMHMGATVGTDTARPFARIDGGGGEGAINAAGNVIGTYIHGLLASPALRSALLAKIGVAGNGRDHGADVDAALDDIAAELAIHIDIGALLRIAAHPV.

Residues 250–436 (RRIVACPILP…IHGLLASPAL (187 aa)) form the GATase cobBQ-type domain. The active-site Nucleophile is the cysteine 332. The active site involves histidine 428.

The protein belongs to the CobB/CobQ family. CobQ subfamily.

The protein operates within cofactor biosynthesis; adenosylcobalamin biosynthesis. Functionally, catalyzes amidations at positions B, D, E, and G on adenosylcobyrinic A,C-diamide. NH(2) groups are provided by glutamine, and one molecule of ATP is hydrogenolyzed for each amidation. This is Cobyric acid synthase from Sphingopyxis alaskensis (strain DSM 13593 / LMG 18877 / RB2256) (Sphingomonas alaskensis).